A 227-amino-acid chain; its full sequence is Cytochrome c oxidase subunit 2 (227 aa).

Over 1–14 (MAYPFQLGLQDATS) the chain is Mitochondrial intermembrane. A helical membrane pass occupies residues 15–45 (PIMEELMNFHDHTLMIVFLISSLVLYIISLM). Residues 46-59 (LTTKLTHTSTMDAQ) are Mitochondrial matrix-facing. Residues 60-87 (EVETIWTILPAVILILIALPSLRILYMM) form a helical membrane-spanning segment. Residues 88–227 (DEINNPVLTV…NFENWSASMI (140 aa)) lie on the Mitochondrial intermembrane side of the membrane. 6 residues coordinate Cu cation: H161, C196, E198, C200, H204, and M207. Residue E198 participates in Mg(2+) binding.

It belongs to the cytochrome c oxidase subunit 2 family. In terms of assembly, component of the cytochrome c oxidase (complex IV, CIV), a multisubunit enzyme composed of 14 subunits. The complex is composed of a catalytic core of 3 subunits MT-CO1, MT-CO2 and MT-CO3, encoded in the mitochondrial DNA, and 11 supernumerary subunits COX4I, COX5A, COX5B, COX6A, COX6B, COX6C, COX7A, COX7B, COX7C, COX8 and NDUFA4, which are encoded in the nuclear genome. The complex exists as a monomer or a dimer and forms supercomplexes (SCs) in the inner mitochondrial membrane with NADH-ubiquinone oxidoreductase (complex I, CI) and ubiquinol-cytochrome c oxidoreductase (cytochrome b-c1 complex, complex III, CIII), resulting in different assemblies (supercomplex SCI(1)III(2)IV(1) and megacomplex MCI(2)III(2)IV(2)). Found in a complex with TMEM177, COA6, COX18, COX20, SCO1 and SCO2. Interacts with TMEM177 in a COX20-dependent manner. Interacts with COX20. Interacts with COX16. Cu cation is required as a cofactor.

The protein resides in the mitochondrion inner membrane. The catalysed reaction is 4 Fe(II)-[cytochrome c] + O2 + 8 H(+)(in) = 4 Fe(III)-[cytochrome c] + 2 H2O + 4 H(+)(out). Its function is as follows. Component of the cytochrome c oxidase, the last enzyme in the mitochondrial electron transport chain which drives oxidative phosphorylation. The respiratory chain contains 3 multisubunit complexes succinate dehydrogenase (complex II, CII), ubiquinol-cytochrome c oxidoreductase (cytochrome b-c1 complex, complex III, CIII) and cytochrome c oxidase (complex IV, CIV), that cooperate to transfer electrons derived from NADH and succinate to molecular oxygen, creating an electrochemical gradient over the inner membrane that drives transmembrane transport and the ATP synthase. Cytochrome c oxidase is the component of the respiratory chain that catalyzes the reduction of oxygen to water. Electrons originating from reduced cytochrome c in the intermembrane space (IMS) are transferred via the dinuclear copper A center (CU(A)) of subunit 2 and heme A of subunit 1 to the active site in subunit 1, a binuclear center (BNC) formed by heme A3 and copper B (CU(B)). The BNC reduces molecular oxygen to 2 water molecules using 4 electrons from cytochrome c in the IMS and 4 protons from the mitochondrial matrix. The sequence is that of Cytochrome c oxidase subunit 2 (MT-CO2) from Maxomys bartelsii (Bartels's Javan maxomys).